An 879-amino-acid polypeptide reads, in one-letter code: Alanine--tRNA ligase (879 aa).

Zn(2+) contacts are provided by His-566, His-570, Cys-668, and His-672.

Belongs to the class-II aminoacyl-tRNA synthetase family. The cofactor is Zn(2+).

It is found in the cytoplasm. It catalyses the reaction tRNA(Ala) + L-alanine + ATP = L-alanyl-tRNA(Ala) + AMP + diphosphate. In terms of biological role, catalyzes the attachment of alanine to tRNA(Ala) in a two-step reaction: alanine is first activated by ATP to form Ala-AMP and then transferred to the acceptor end of tRNA(Ala). Also edits incorrectly charged Ser-tRNA(Ala) and Gly-tRNA(Ala) via its editing domain. This is Alanine--tRNA ligase from Oceanobacillus iheyensis (strain DSM 14371 / CIP 107618 / JCM 11309 / KCTC 3954 / HTE831).